The following is a 280-amino-acid chain: tRNA (guanine-N(1)-)-methyltransferase (280 aa).

Residues 71 to 94 form a disordered region; that stretch reads DDVSSGTASTQDLQSALPHLSKPR. Polar residues predominate over residues 74 to 84; the sequence is SSGTASTQDLQ. Residues G146 and 170–175 each bind S-adenosyl-L-methionine; that span reads IGDYVL.

Belongs to the RNA methyltransferase TrmD family. In terms of assembly, homodimer.

The protein localises to the cytoplasm. It carries out the reaction guanosine(37) in tRNA + S-adenosyl-L-methionine = N(1)-methylguanosine(37) in tRNA + S-adenosyl-L-homocysteine + H(+). Functionally, specifically methylates guanosine-37 in various tRNAs. This is tRNA (guanine-N(1)-)-methyltransferase from Corynebacterium aurimucosum (strain ATCC 700975 / DSM 44827 / CIP 107346 / CN-1) (Corynebacterium nigricans).